Reading from the N-terminus, the 95-residue chain is DNA-directed RNA polymerase subunit Rpo11 (95 aa).

This sequence belongs to the archaeal Rpo11/eukaryotic RPB11/RPC19 RNA polymerase subunit family. In terms of assembly, part of the RNA polymerase complex.

The protein resides in the cytoplasm. The enzyme catalyses RNA(n) + a ribonucleoside 5'-triphosphate = RNA(n+1) + diphosphate. In terms of biological role, DNA-dependent RNA polymerase (RNAP) catalyzes the transcription of DNA into RNA using the four ribonucleoside triphosphates as substrates. This chain is DNA-directed RNA polymerase subunit Rpo11, found in Thermococcus sibiricus (strain DSM 12597 / MM 739).